The chain runs to 402 residues: Phosphoglycerate kinase (402 aa).

Residues Asp-24–Asn-26, Arg-40, His-63–Arg-66, Arg-122, and Arg-155 contribute to the substrate site. ATP contacts are provided by residues Lys-206, Gly-297, Glu-328, and Gly-358 to Ser-361.

Belongs to the phosphoglycerate kinase family. Monomer.

It is found in the cytoplasm. The enzyme catalyses (2R)-3-phosphoglycerate + ATP = (2R)-3-phospho-glyceroyl phosphate + ADP. Its pathway is carbohydrate degradation; glycolysis; pyruvate from D-glyceraldehyde 3-phosphate: step 2/5. This is Phosphoglycerate kinase from Prochlorococcus marinus (strain AS9601).